The following is a 231-amino-acid chain: Phosphoglycolate phosphatase, plasmid (231 aa).

Asp-14 functions as the Nucleophile in the catalytic mechanism. Positions 14, 16, and 175 each coordinate Mg(2+).

It belongs to the HAD-like hydrolase superfamily. CbbY/CbbZ/Gph/YieH family. As to quaternary structure, homotrimer. Mg(2+) is required as a cofactor.

The enzyme catalyses 2-phosphoglycolate + H2O = glycolate + phosphate. It participates in organic acid metabolism; glycolate biosynthesis; glycolate from 2-phosphoglycolate: step 1/1. Its function is as follows. Specifically catalyzes the dephosphorylation of 2-phosphoglycolate. Is involved in the dissimilation of the intracellular 2-phosphoglycolate formed during the DNA repair of 3'-phosphoglycolate ends, a major class of DNA lesions induced by oxidative stress. The chain is Phosphoglycolate phosphatase, plasmid (cbbZP) from Cupriavidus necator (strain ATCC 17699 / DSM 428 / KCTC 22496 / NCIMB 10442 / H16 / Stanier 337) (Ralstonia eutropha).